The sequence spans 448 residues: N-succinylarginine dihydrolase (448 aa).

Residues 19-28 (GGLSYGNVAS), Asn110, and 137-138 (HR) contribute to the substrate site. The active site involves Glu174. Arg214 provides a ligand contact to substrate. The active site involves His250. Substrate-binding residues include Asp252 and Asn365. The Nucleophile role is filled by Cys371.

This sequence belongs to the succinylarginine dihydrolase family. In terms of assembly, homodimer.

It catalyses the reaction N(2)-succinyl-L-arginine + 2 H2O + 2 H(+) = N(2)-succinyl-L-ornithine + 2 NH4(+) + CO2. It participates in amino-acid degradation; L-arginine degradation via AST pathway; L-glutamate and succinate from L-arginine: step 2/5. Catalyzes the hydrolysis of N(2)-succinylarginine into N(2)-succinylornithine, ammonia and CO(2). This chain is N-succinylarginine dihydrolase, found in Pseudomonas fluorescens (strain Pf0-1).